A 546-amino-acid polypeptide reads, in one-letter code: Coatomer subunit delta (546 aa).

The segment at 190 to 440 (NRFMGSKDPN…VIFTIPVFPQ (251 aa)) is interaction with DSL1. A disordered region spans residues 236-287 (PMATSQRAGHSATGGMKLGGGAGRRAGAAPRPSAISSASSGTPPPPEEDVPE). Over residues 260-276 (RAGAAPRPSAISSASSG) the composition is skewed to low complexity. Position 277 is a phosphothreonine (Thr277). In terms of domain architecture, MHD spans 288–546 (NNGILISIKE…SLKSDEYLVQ (259 aa)).

Belongs to the adaptor complexes medium subunit family. Delta-COP subfamily. As to quaternary structure, oligomeric complex that consists of at least the alpha, beta, beta', gamma, delta, epsilon and zeta subunits. Interacts with DSL1.

It is found in the cytoplasm. The protein localises to the golgi apparatus membrane. It localises to the cytoplasmic vesicle. The protein resides in the COPI-coated vesicle membrane. In terms of biological role, the coatomer is a cytosolic protein complex that binds to dilysine motifs and reversibly associates with Golgi non-clathrin-coated vesicles, which further mediate biosynthetic protein transport from the ER, via the Golgi up to the trans Golgi network. Coatomer complex is required for budding from Golgi membranes, and is essential for the retrograde Golgi-to-ER transport of dilysine-tagged proteins. In Saccharomyces cerevisiae (strain ATCC 204508 / S288c) (Baker's yeast), this protein is Coatomer subunit delta (RET2).